Here is a 230-residue protein sequence, read N- to C-terminus: DNA ADP-ribosyl transferase (230 aa).

The DarT domain occupies 26 to 230 (WIVWHFTHAD…KYVIKPGMYY (205 aa)). NAD(+) is bound by residues 30–32 (HFT), G39, L47, and R67. R67 acts as the Proton acceptor in catalysis. E183 is an active-site residue.

Belongs to the DarT ADP-ribosyltransferase family. In terms of assembly, interacts with cognate antitoxin DarG (via C-terminus); this heterodimeric complex neutralizes the toxic effect of DarT by preventing ssDNA binding to DarT and consequently inactivating the toxin by direct protein-protein interactions.

The catalysed reaction is a thymidine in DNA + NAD(+) = an N-(ADP-alpha-D-ribosyl)-thymidine in DNA + nicotinamide + H(+). Its function is as follows. Toxic component of the hybrid type II/IV toxin-antitoxin (TA) system DarTG, which plays a crucial role in controlling bacterial growth and bacteriophage infection. ADP-ribosylates ssDNA, preferentially in the motif TTTW. In case of phage infection, DarT toxin ADP-ribosylates DNA, which inhibits both viral DNA and RNA synthesis and leads to abortive infection. Its toxic effect is neutralized by cognate antitoxin DarG. The chain is DNA ADP-ribosyl transferase from Mycobacterium bovis (strain BCG / Pasteur 1173P2).